The sequence spans 366 residues: Beta-1,3-glucan-binding protein (366 aa).

The first 17 residues, 1-17 (MKGFVASVVLLACGALA), serve as a signal peptide directing secretion. Residues 18–364 (ADIVEPEDCT…YVRVWKMEST (347 aa)) form the GH16 domain. A glycan (N-linked (GlcNAc...) asparagine) is linked at Asn66.

The protein belongs to the glycosyl hydrolase 16 family. As to expression, constitutively expressed in hemocytes.

It is found in the secreted. In terms of biological role, binds to beta-1,3-glucan. May play a role in recognition of microorganisms and in activation of the prophenoloxidase cascade. This Penaeus monodon (Giant tiger prawn) protein is Beta-1,3-glucan-binding protein.